The primary structure comprises 478 residues: Growth/differentiation factor 10 (478 aa).

The signal sequence occupies residues 1-33 (MARGPARTSLGPGSQQLPLLSLLLLLLLRDADG). The segment at 34-70 (SHTAAARPPPPAAADGLAGDKNPQRSPGDVAAAQSPG) is disordered. A propeptide spanning residues 34–368 (SHTAAARPPP…EKTMQKARKK (335 aa)) is cleaved from the precursor. 3 N-linked (GlcNAc...) asparagine glycosylation sites follow: Asn-118, Asn-155, and Asn-280. Residues 267–345 (PFQAGDPEPG…GRKDRRKKGQ (79 aa)) form a disordered region. Residues 291 to 301 (TQATGPLQNNE) show a composition bias toward polar residues. A compositionally biased stretch (basic residues) spans 331–343 (LKPRPGRKDRRKK). Disulfide bonds link Cys-376/Cys-443, Cys-405/Cys-475, and Cys-409/Cys-477. N-linked (GlcNAc...) asparagine glycosylation occurs at Asn-469.

It belongs to the TGF-beta family. Homodimer or heterodimer. Can form a non-covalent complex of the mature region and the pro-region.

Its subcellular location is the secreted. In terms of biological role, growth factor involved in osteogenesis and adipogenesis. Plays an inhibitory role in the process of osteoblast differentiation via SMAD2/3 pathway. Plays an inhibitory role in the process of adipogenesis. The protein is Growth/differentiation factor 10 (GDF10) of Bos taurus (Bovine).